Reading from the N-terminus, the 471-residue chain is Collagen alpha-3(IV) chain (471 aa).

The tract at residues 1–238 is triple-helical region; the sequence is GLPGRKGPVG…KGKPGDTGPP (238 aa). Positions 1–241 are disordered; sequence GLPGRKGPVG…PGDTGPPAAG (241 aa). Over residues 52–61 the composition is skewed to pro residues; it reads MPGPPGPPGS. Positions 106-108 match the Cell attachment site motif; that stretch reads RGD. Over residues 127–141 the composition is skewed to pro residues; that stretch reads PGPPGPPGQSGPKGP. Residues 165-174 show a composition bias toward low complexity; that stretch reads SAGEPGMQGE. Residues 175–187 show a composition bias toward pro residues; it reads PGPPGPPGDPGPC. Hydroxyproline is present on residues proline 232 and proline 238. In terms of domain architecture, Collagen IV NC1 spans 246-470; sequence GFVFTRHSQT…SRCQVCMKMR (225 aa). 6 disulfide bridges follow: cysteine 261-cysteine 352, cysteine 294-cysteine 349, cysteine 306-cysteine 312, cysteine 371-cysteine 466, cysteine 405-cysteine 463, and cysteine 417-cysteine 423. An S-Lysyl-methionine sulfilimine (Met-Lys) (interchain with K-452) cross-link involves residue methionine 334. Residue lysine 452 forms an S-Lysyl-methionine sulfilimine (Lys-Met) (interchain with M-334) linkage.

Belongs to the type IV collagen family. There are six type IV collagen isoforms, alpha 1(IV)-alpha 6(IV), each of which can form a triple helix structure with 2 other chains to generate type IV collagen network. The alpha 3(IV) chain forms a triple helical protomer with alpha 4(IV) and alpha 5(IV); this triple helical structure dimerizes through NC1-NC1 domain interactions such that the alpha 3(IV), alpha 4(IV) and alpha 5(IV) chains of one protomer connect with the alpha 5(IV), alpha 4(IV) and alpha 3(IV) chains of the opposite promoter, respectively. Interacts with ITGB3. Associates with LAMB2 at the neuromuscular junction and in GBM. Prolines at the third position of the tripeptide repeating unit (G-X-Y) are hydroxylated in some or all of the chains. In terms of processing, type IV collagens contain numerous cysteine residues which are involved in inter- and intramolecular disulfide bonding. 12 of these, located in the NC1 domain, are conserved in all known type IV collagens. Post-translationally, the trimeric structure of the NC1 domains is stabilized by covalent bonds between Lys and Met residues. Phosphorylated. Thought to be phosphorylated by CERT, but CERT does not have kinase activity.

It is found in the secreted. It localises to the extracellular space. Its subcellular location is the extracellular matrix. The protein localises to the basement membrane. In terms of biological role, type IV collagen is the major structural component of glomerular basement membranes (GBM), forming a 'chicken-wire' meshwork together with laminins, proteoglycans and entactin/nidogen. The sequence is that of Collagen alpha-3(IV) chain (COL4A3) from Bos taurus (Bovine).